A 134-amino-acid chain; its full sequence is Calvin cycle protein CP12-3, chloroplastic (134 aa).

A disordered region spans residues 1–21; the sequence is MISGSATASHGRVLLPSQRER. The transit peptide at 1 to 42 directs the protein to the chloroplast; the sequence is MISGSATASHGRVLLPSQRERRPVSTGSNILRFRETVPRQFS. Intrachain disulfides connect Cys78–Cys87 and Cys120–Cys129.

This sequence belongs to the CP12 family. As to quaternary structure, monomer. Component of a complex that contains two dimers of PRK, two tetramers of GAPDH and CP12. CP12 associates with GAPDH, causing its conformation to change. This GAPDH/CP12 complex binds PRK to form a half-complex (one unit). This unit probably dimerizes due partially to interactions between the enzymes of each unit. Contains two disulfide bonds; only the oxidized protein, with two disulfide bonds, is active in complex formation. The C-terminal disulfide is involved in the interaction with GAPDH and the N-terminal disulfide mediates the binding of PRK with this binary complex. As to expression, mostly expressed, at low levels, in stems and, to a lesser extent, in leaves and roots.

It localises to the plastid. It is found in the chloroplast. Acts as a linker essential in the assembly of a core complex of PRK/GAPDH. Coordinates the reversible inactivation of chloroplast enzymes GAPDH and PRK during darkness in photosynthetic tissues. The chain is Calvin cycle protein CP12-3, chloroplastic (CP12-3) from Arabidopsis thaliana (Mouse-ear cress).